The sequence spans 257 residues: Diphthine synthase (257 aa).

S-adenosyl-L-methionine contacts are provided by residues Leu9, Asp85, Val88, 113–114, Leu164, Ala207, and His232; that span reads SI.

The protein belongs to the diphthine synthase family. In terms of assembly, homodimer.

It catalyses the reaction 2-[(3S)-amino-3-carboxypropyl]-L-histidyl-[translation elongation factor 2] + 3 S-adenosyl-L-methionine = diphthine-[translation elongation factor 2] + 3 S-adenosyl-L-homocysteine + 3 H(+). Its pathway is protein modification; peptidyl-diphthamide biosynthesis. Functionally, S-adenosyl-L-methionine-dependent methyltransferase that catalyzes the trimethylation of the amino group of the modified target histidine residue in translation elongation factor 2 (EF-2), to form an intermediate called diphthine. The three successive methylation reactions represent the second step of diphthamide biosynthesis. This Methanococcus aeolicus (strain ATCC BAA-1280 / DSM 17508 / OCM 812 / Nankai-3) protein is Diphthine synthase.